The following is a 60-amino-acid chain: Large ribosomal subunit protein bL32 (60 aa).

Disordered regions lie at residues 1 to 28 (MAVQQNKKSPSKRGMHRSHNALALPGIA) and 41 to 60 (HISPNGFYRGRQVLKPKSEA). Residues 9-19 (SPSKRGMHRSH) are compositionally biased toward basic residues.

It belongs to the bacterial ribosomal protein bL32 family.

In Verminephrobacter eiseniae (strain EF01-2), this protein is Large ribosomal subunit protein bL32.